Here is a 179-residue protein sequence, read N- to C-terminus: Caveolin-1 (179 aa).

Ser-2 is modified (N-acetylserine). Position 2 is a phosphoserine (Ser-2). The tract at residues 2–95 (SGGKYVDSEG…WKASFTTFTV (94 aa)) is required for homooligomerization. Residues 2 to 105 (SGGKYVDSEG…TKYWFYRLLS (104 aa)) lie on the Cytoplasmic side of the membrane. Residue Lys-5 is modified to N6-acetyllysine; alternate. Lys-5 participates in a covalent cross-link: Glycyl lysine isopeptide (Lys-Gly) (interchain with G-Cter in ubiquitin); alternate. Tyr-6 bears the Phosphotyrosine mark. Phosphoserine is present on Ser-9. Position 14 is a phosphotyrosine; by ABL1 (Tyr-14). The residue at position 25 (Tyr-25) is a Phosphotyrosine. Residues Lys-26 and Lys-30 each participate in a glycyl lysine isopeptide (Lys-Gly) (interchain with G-Cter in ubiquitin) cross-link. Residue Ser-37 is modified to Phosphoserine. Glycyl lysine isopeptide (Lys-Gly) (interchain with G-Cter in ubiquitin) cross-links involve residues Lys-39, Lys-48, and Lys-58. Residues 83-95 (DGIWKASFTTFTV) form an interaction with CAVIN3 region. An intramembrane region (helical) is located at residues 106–126 (ALFGIPMALIWGIYFAILSFL). The Cytoplasmic segment spans residues 127–179 (HIWAVVPCIKSFLIEIQCISRVYSIYVHTFCDPLFEAIGKVFSNIRINMQKEI). The interacts with SPRY1, SPRY2, SPRY3 and SPRY4 stretch occupies residues 132 to 143 (VPCIKSFLIEIQ). S-palmitoyl cysteine attachment occurs at residues Cys-134, Cys-144, and Cys-157. An interacts with SPRY1, SPRY2, and SPRY4 region spans residues 150 to 161 (SIYVHTFCDPLF). The interval 168–179 (FSNIRINMQKEI) is interacts with SPRY1, SPRY2, SPRY3 and SPRY4.

It belongs to the caveolin family. Homooligomer. Interacts with GLIPR2. Interacts with NOSTRIN. Interacts with SNAP25 and STX1A. Interacts (via the N-terminus) with DPP4; the interaction is direct. Interacts with CTNNB1, CDH1 and JUP. Interacts with PACSIN2; this interaction induces membrane tubulation. Interacts with SLC7A9. Interacts with BMX and BTK. Interacts with TGFBR1. Interacts with CAVIN3 (via leucine-zipper domain) in a cholesterol-sensitive manner. Interacts with CAVIN1. Interacts with EHD2 in a cholesterol-dependent manner. Forms a ternary complex with UBXN6 and VCP; mediates CAV1 targeting to lysosomes for degradation. Interacts with ABCG1; this interaction regulates ABCG1-mediated cholesterol efflux. Interacts with NEU3; this interaction enhances NEU3 sialidase activity within caveola. Interacts (via C-terminus) with SPRY1, SPRY2 (via C-terminus), SPRY3, and SPRY4. Interacts with IGFBP5; this interaction allows trafficking of IGFBP5 from the plasma membrane to the nucleus. In terms of processing, phosphorylated at Tyr-14 by ABL1 in response to oxidative stress. Ubiquitinated. Undergo monoubiquitination and multi- and/or polyubiquitination. Monoubiquitination of N-terminal lysines promotes integration in a ternary complex with UBXN6 and VCP which promotes oligomeric CAV1 targeting to lysosomes for degradation. Ubiquitinated by ZNRF1; leading to degradation and modulation of the TLR4-mediated immune response.

The protein resides in the golgi apparatus membrane. It is found in the cell membrane. The protein localises to the membrane. Its subcellular location is the caveola. It localises to the membrane raft. Its function is as follows. May act as a scaffolding protein within caveolar membranes. Forms a stable heterooligomeric complex with CAV2 that targets to lipid rafts and drives caveolae formation. Mediates the recruitment of CAVIN proteins (CAVIN1/2/3/4) to the caveolae. Interacts directly with G-protein alpha subunits and can functionally regulate their activity. Involved in the costimulatory signal essential for T-cell receptor (TCR)-mediated T-cell activation. Its binding to DPP4 induces T-cell proliferation and NF-kappa-B activation in a T-cell receptor/CD3-dependent manner. Recruits CTNNB1 to caveolar membranes and may regulate CTNNB1-mediated signaling through the Wnt pathway. Negatively regulates TGFB1-mediated activation of SMAD2/3 by mediating the internalization of TGFBR1 from membrane rafts leading to its subsequent degradation. Binds 20(S)-hydroxycholesterol (20(S)-OHC). The sequence is that of Caveolin-1 (CAV1) from Eulemur macaco macaco (Black lemur).